We begin with the raw amino-acid sequence, 502 residues long: ATP synthase subunit alpha (502 aa).

Residue 169 to 176 (GDRQTGKT) coordinates ATP.

The protein belongs to the ATPase alpha/beta chains family. As to quaternary structure, F-type ATPases have 2 components, CF(1) - the catalytic core - and CF(0) - the membrane proton channel. CF(1) has five subunits: alpha(3), beta(3), gamma(1), delta(1), epsilon(1). CF(0) has three main subunits: a(1), b(2) and c(9-12). The alpha and beta chains form an alternating ring which encloses part of the gamma chain. CF(1) is attached to CF(0) by a central stalk formed by the gamma and epsilon chains, while a peripheral stalk is formed by the delta and b chains.

The protein localises to the cell inner membrane. It catalyses the reaction ATP + H2O + 4 H(+)(in) = ADP + phosphate + 5 H(+)(out). Functionally, produces ATP from ADP in the presence of a proton gradient across the membrane. The alpha chain is a regulatory subunit. The sequence is that of ATP synthase subunit alpha from Kosmotoga olearia (strain ATCC BAA-1733 / DSM 21960 / TBF 19.5.1).